The following is a 367-amino-acid chain: Quinolinate synthase (367 aa).

Iminosuccinate-binding residues include His45 and Ser62. Cys109 serves as a coordination point for [4Fe-4S] cluster. Iminosuccinate is bound by residues 140–142 (YVN) and Ser161. Cys229 is a [4Fe-4S] cluster binding site. Iminosuccinate-binding positions include 255-257 (HPE) and Thr272. Cys319 serves as a coordination point for [4Fe-4S] cluster.

It belongs to the quinolinate synthase family. Type 3 subfamily. Requires [4Fe-4S] cluster as cofactor.

Its subcellular location is the cytoplasm. It catalyses the reaction iminosuccinate + dihydroxyacetone phosphate = quinolinate + phosphate + 2 H2O + H(+). It participates in cofactor biosynthesis; NAD(+) biosynthesis; quinolinate from iminoaspartate: step 1/1. Functionally, catalyzes the condensation of iminoaspartate with dihydroxyacetone phosphate to form quinolinate. The sequence is that of Quinolinate synthase from Anoxybacillus flavithermus (strain DSM 21510 / WK1).